A 513-amino-acid polypeptide reads, in one-letter code: t-SNARE domain-containing protein 1 (513 aa).

Disordered stretches follow at residues 1-23 (MSYGSIARGGGLGSRGPFGGPSR) and 49-128 (ESKL…KPNF). Residues 7 to 19 (ARGGGLGSRGPFG) show a composition bias toward gly residues. Ser378 bears the Phosphoserine mark. The t-SNARE coiled-coil homology domain maps to 416-478 (LEAIRLREEA…EAARQLLAGA (63 aa)). The helical transmembrane segment at 491–511 (CFLSAGVTALLVIIIIIATSV) threads the bilayer.

The protein resides in the membrane. The chain is t-SNARE domain-containing protein 1 (TSNARE1) from Homo sapiens (Human).